The sequence spans 397 residues: Elongation factor Tu (397 aa).

A tr-type G domain is found at 10-207 (KPHVNVGTIG…TLDSYIPEPV (198 aa)). A G1 region spans residues 19–26 (GHVDHGKT). Residue 19–26 (GHVDHGKT) coordinates GTP. Position 26 (threonine 26) interacts with Mg(2+). The interval 60-64 (GITIN) is G2. Phosphotyrosine is present on tyrosine 77. The segment at 81–84 (DCPG) is G3. 81–85 (DCPGH) is a GTP binding site. A Phosphotyrosine modification is found at tyrosine 88. 136–139 (NKAD) contacts GTP. The interval 136–139 (NKAD) is G4. Positions 174–176 (SAL) are G5.

It belongs to the TRAFAC class translation factor GTPase superfamily. Classic translation factor GTPase family. EF-Tu/EF-1A subfamily. As to quaternary structure, monomer.

Its subcellular location is the cytoplasm. The enzyme catalyses GTP + H2O = GDP + phosphate + H(+). Its function is as follows. GTP hydrolase that promotes the GTP-dependent binding of aminoacyl-tRNA to the A-site of ribosomes during protein biosynthesis. This chain is Elongation factor Tu, found in Pseudomonas aeruginosa (strain UCBPP-PA14).